Consider the following 176-residue polypeptide: Disulfide bond formation protein B (176 aa).

Topologically, residues 1-14 (MLQFLNRCSRGRGA) are cytoplasmic. The chain crosses the membrane as a helical span at residues 15-31 (WLLMALTAFLLELTALY). Residues 32–49 (FQHIMLLQPCVMCIYERV) are Periplasmic-facing. The cysteines at positions 41 and 44 are disulfide-linked. Residues 50–65 (ALFGILGASLLGAIAP) traverse the membrane as a helical segment. Over 66–71 (RSPLRY) the chain is Cytoplasmic. The helical transmembrane segment at 72-89 (LAIAVWIYSAWKGVQLAW) threads the bilayer. Residues 90-144 (AHTMLQLNPSPFNTCDFFVNFPSWLPLDKWLPAVFAASGDCSERQWQFMSLEMPQ) lie on the Periplasmic side of the membrane. Cysteine 104 and cysteine 130 are joined by a disulfide. The helical transmembrane segment at 145 to 163 (WLVGIFAAYLVIAVLVLIS) threads the bilayer. The Cytoplasmic portion of the chain corresponds to 164-176 (QFVKPKRRDLFGR).

Belongs to the DsbB family.

The protein localises to the cell inner membrane. In terms of biological role, required for disulfide bond formation in some periplasmic proteins. Acts by oxidizing the DsbA protein. This is Disulfide bond formation protein B from Yersinia pestis bv. Antiqua (strain Nepal516).